A 402-amino-acid chain; its full sequence is 4-hydroxy-3-methylbut-2-enyl diphosphate reductase (402 aa).

Cys-66 serves as a coordination point for [4Fe-4S] cluster. His-96 is a binding site for (2E)-4-hydroxy-3-methylbut-2-enyl diphosphate. His-96 lines the dimethylallyl diphosphate pocket. His-96 provides a ligand contact to isopentenyl diphosphate. Cys-157 is a [4Fe-4S] cluster binding site. Residue His-185 participates in (2E)-4-hydroxy-3-methylbut-2-enyl diphosphate binding. Residue His-185 coordinates dimethylallyl diphosphate. Residue His-185 participates in isopentenyl diphosphate binding. Residue Glu-187 is the Proton donor of the active site. Thr-250 provides a ligand contact to (2E)-4-hydroxy-3-methylbut-2-enyl diphosphate. Cys-288 provides a ligand contact to [4Fe-4S] cluster. The (2E)-4-hydroxy-3-methylbut-2-enyl diphosphate site is built by Ser-317, Ser-318, Asn-319, and Ser-379. 4 residues coordinate dimethylallyl diphosphate: Ser-317, Ser-318, Asn-319, and Ser-379. The isopentenyl diphosphate site is built by Ser-317, Ser-318, Asn-319, and Ser-379.

The protein belongs to the IspH family. It depends on [4Fe-4S] cluster as a cofactor.

The enzyme catalyses isopentenyl diphosphate + 2 oxidized [2Fe-2S]-[ferredoxin] + H2O = (2E)-4-hydroxy-3-methylbut-2-enyl diphosphate + 2 reduced [2Fe-2S]-[ferredoxin] + 2 H(+). It carries out the reaction dimethylallyl diphosphate + 2 oxidized [2Fe-2S]-[ferredoxin] + H2O = (2E)-4-hydroxy-3-methylbut-2-enyl diphosphate + 2 reduced [2Fe-2S]-[ferredoxin] + 2 H(+). Its pathway is isoprenoid biosynthesis; dimethylallyl diphosphate biosynthesis; dimethylallyl diphosphate from (2E)-4-hydroxy-3-methylbutenyl diphosphate: step 1/1. The protein operates within isoprenoid biosynthesis; isopentenyl diphosphate biosynthesis via DXP pathway; isopentenyl diphosphate from 1-deoxy-D-xylulose 5-phosphate: step 6/6. In terms of biological role, catalyzes the conversion of 1-hydroxy-2-methyl-2-(E)-butenyl 4-diphosphate (HMBPP) into a mixture of isopentenyl diphosphate (IPP) and dimethylallyl diphosphate (DMAPP). Acts in the terminal step of the DOXP/MEP pathway for isoprenoid precursor biosynthesis. This Nostoc punctiforme (strain ATCC 29133 / PCC 73102) protein is 4-hydroxy-3-methylbut-2-enyl diphosphate reductase.